A 197-amino-acid polypeptide reads, in one-letter code: MPPAGLRRAAPLTAIALLVLGAPLVLAGEDCLWYLDRNGSWHPGFNCEFFTFCCGTCYHRYCCRDLTLLITERQQKHCLAFSPKTIAGIASAVILFVAVVATTICCFLCSCCYLYRRRQQLQSPFEGQEIPMTGIPVQPVYPYPQDPKAGPAPPQPGFIYPPSGPAPQYPLYPAGPPVYNPAAPPPYMPPQPSYPGA.

Residues 1–27 (MPPAGLRRAAPLTAIALLVLGAPLVLA) form the signal peptide. Over 28–87 (GEDCLWYLDRNGSWHPGFNCEFFTFCCGTCYHRYCCRDLTLLITERQQKHCLAFSPKTIA) the chain is Extracellular. A helical transmembrane segment spans residues 88-108 (GIASAVILFVAVVATTICCFL). Over 109–197 (CSCCYLYRRR…MPPQPSYPGA (89 aa)) the chain is Cytoplasmic.

Belongs to the shisa family.

Its subcellular location is the membrane. In Homo sapiens (Human), this protein is Protein shisa-4 (SHISA4).